A 262-amino-acid polypeptide reads, in one-letter code: MSLIHPTAIVDPKAQLDSSVEVGPYTVIGPDVVIGAGSKIGPHVVVEGHTTIGADNKIFQFASIGAAPQDKKYAGEPTLLTIGDRNTIREFVTINLGTSQDVGITRLGNDNWIMAYVHIAHDCQLGSNIILANNATLAGHVHLEDWVFLGGFTSVHQFCRIGAHAMTAFTAAVSQDIPPFVTAAGNRAVPAGINSEGLKRRGFSSEQIMAIKRGYKTIYRSGLPLEEAKLALQAEEEKSPDAAQYLRQLREFIEASPRGIIR.

This sequence belongs to the transferase hexapeptide repeat family. LpxA subfamily. As to quaternary structure, homotrimer.

The protein localises to the cytoplasm. The enzyme catalyses a (3R)-hydroxyacyl-[ACP] + UDP-N-acetyl-alpha-D-glucosamine = a UDP-3-O-[(3R)-3-hydroxyacyl]-N-acetyl-alpha-D-glucosamine + holo-[ACP]. The protein operates within glycolipid biosynthesis; lipid IV(A) biosynthesis; lipid IV(A) from (3R)-3-hydroxytetradecanoyl-[acyl-carrier-protein] and UDP-N-acetyl-alpha-D-glucosamine: step 1/6. Functionally, involved in the biosynthesis of lipid A, a phosphorylated glycolipid that anchors the lipopolysaccharide to the outer membrane of the cell. This is Acyl-[acyl-carrier-protein]--UDP-N-acetylglucosamine O-acyltransferase from Janthinobacterium sp. (strain Marseille) (Minibacterium massiliensis).